A 360-amino-acid chain; its full sequence is Variable large protein 14 (360 aa).

The signal sequence occupies residues 1-18 (MRKRISAIIMTLFMVLAS). The N-palmitoyl cysteine moiety is linked to residue C19. Residue C19 is the site of S-diacylglycerol cysteine attachment.

Belongs to the variable large protein (Vlp) family. Beta subfamily.

It is found in the cell outer membrane. In terms of biological role, the Vlp and Vsp proteins are antigenically distinct proteins, only one vlp or vsp gene is transcriptionally active at any one time. Switching between these genes is a mechanism of host immune response evasion. In Borrelia hermsii, this protein is Variable large protein 14.